The following is a 145-amino-acid chain: 3-hydroxyacyl-[acyl-carrier-protein] dehydratase FabZ (145 aa).

Histidine 47 is an active-site residue.

It belongs to the thioester dehydratase family. FabZ subfamily.

Its subcellular location is the cytoplasm. The enzyme catalyses a (3R)-hydroxyacyl-[ACP] = a (2E)-enoyl-[ACP] + H2O. Involved in unsaturated fatty acids biosynthesis. Catalyzes the dehydration of short chain beta-hydroxyacyl-ACPs and long chain saturated and unsaturated beta-hydroxyacyl-ACPs. This Vesicomyosocius okutanii subsp. Calyptogena okutanii (strain HA) protein is 3-hydroxyacyl-[acyl-carrier-protein] dehydratase FabZ.